The primary structure comprises 148 residues: Small ribosomal subunit protein eS6 (148 aa).

It belongs to the eukaryotic ribosomal protein eS6 family.

This Pyrobaculum islandicum (strain DSM 4184 / JCM 9189 / GEO3) protein is Small ribosomal subunit protein eS6.